A 470-amino-acid chain; its full sequence is A-type ATP synthase subunit B (470 aa).

It belongs to the ATPase alpha/beta chains family. As to quaternary structure, has multiple subunits with at least A(3), B(3), C, D, E, F, H, I and proteolipid K(x).

It localises to the cell membrane. In terms of biological role, component of the A-type ATP synthase that produces ATP from ADP in the presence of a proton gradient across the membrane. The B chain is a regulatory subunit. The chain is A-type ATP synthase subunit B from Haloarcula marismortui (strain ATCC 43049 / DSM 3752 / JCM 8966 / VKM B-1809) (Halobacterium marismortui).